Consider the following 493-residue polypeptide: GTPase Der (493 aa).

EngA-type G domains lie at 3 to 166 (PVVA…SGKG) and 207 to 380 (LKLA…DCAT). GTP-binding positions include 9 to 16 (GRPNVGKS), 56 to 60 (DTGGI), 118 to 121 (NKTD), 213 to 220 (GKPNVGKS), 260 to 264 (DTAGV), and 325 to 328 (NKWD). The KH-like domain occupies 381–465 (RRVNTSLLTR…PIRIQFKEGA (85 aa)).

This sequence belongs to the TRAFAC class TrmE-Era-EngA-EngB-Septin-like GTPase superfamily. EngA (Der) GTPase family. In terms of assembly, associates with the 50S ribosomal subunit.

Its function is as follows. GTPase that plays an essential role in the late steps of ribosome biogenesis. The chain is GTPase Der from Photorhabdus laumondii subsp. laumondii (strain DSM 15139 / CIP 105565 / TT01) (Photorhabdus luminescens subsp. laumondii).